A 682-amino-acid polypeptide reads, in one-letter code: Potassium-transporting ATPase ATP-binding subunit (682 aa).

4 helical membrane-spanning segments follow: residues 34-54 (PVMFIVWIGSLLTTCISIAMA), 62-82 (ALFSAAISGWLWVTVLFANFA), 219-239 (IALTILLIALTIVFLLATATL), and 254-274 (VLVALLVCLIPTTIGGLLSAI). The active-site 4-aspartylphosphate intermediate is aspartate 307. Residues aspartate 344, glutamate 348, 377 to 384 (FTAQSRMS), and lysine 395 contribute to the ATP site. Residues aspartate 518 and aspartate 522 each coordinate Mg(2+). 3 helical membrane-spanning segments follow: residues 588 to 608 (FAIIPAAFAATYPQLNALNIM), 616 to 636 (AILSAVIFNALIIVFLIPLAL), and 656 to 676 (IYGLGGLLVPFIGIKVIDLLL).

Belongs to the cation transport ATPase (P-type) (TC 3.A.3) family. Type IA subfamily. In terms of assembly, the system is composed of three essential subunits: KdpA, KdpB and KdpC.

It is found in the cell inner membrane. It carries out the reaction K(+)(out) + ATP + H2O = K(+)(in) + ADP + phosphate + H(+). Part of the high-affinity ATP-driven potassium transport (or Kdp) system, which catalyzes the hydrolysis of ATP coupled with the electrogenic transport of potassium into the cytoplasm. This subunit is responsible for energy coupling to the transport system and for the release of the potassium ions to the cytoplasm. This chain is Potassium-transporting ATPase ATP-binding subunit, found in Escherichia coli O6:K15:H31 (strain 536 / UPEC).